Reading from the N-terminus, the 336-residue chain is MSALEKNKSFDLLKQNAIYFVLLILLGIIIAQDPTFLNLVNFSNILTQSSVRLIIALGVAGLLITQGTDLSAGRQVGLAAVISATMLQSMENINRVFPEMGQIPIPVVILAVCAIGAVIGLVNGLVIAYLNVTPFIATMGTMIIIYGFNSLYYDAVGGSPIAGFSENFSTFAQGFFRVGSFKLSYITIYAAIAALLVWIMWNKTRFGKNVFAIGGNPEAAKVSGVNVARNLVAIYMIAGMFYAFGGMLEAGRIGSATNNLGFMYELDAIAACVVGGVSFAGGVGTVIGVITGVIIFTVINYGLTYIGVNPYWQYIIKGSIIILAVAIDSLKYAKKK.

Transmembrane regions (helical) follow at residues 17-37 (AIYF…PTFL), 53-73 (LIIA…LSAG), 107-127 (VVIL…GLVI), 128-148 (AYLN…IYGF), 181-201 (FKLS…WIMW), 231-251 (LVAI…LEAG), 257-277 (TNNL…VGGV), and 306-326 (IGVN…LAVA).

The protein belongs to the binding-protein-dependent transport system permease family. AraH/RbsC subfamily. As to quaternary structure, the complex is composed of one ATP-binding protein (MglA), two transmembrane proteins (MglC) and a solute-binding protein (MglB).

It localises to the cell inner membrane. Part of the ABC transporter complex MglABC involved in galactose/methyl galactoside import. Probably responsible for the translocation of the substrate across the membrane. This chain is Galactose/methyl galactoside import permease protein MglC (mglC), found in Haemophilus influenzae (strain ATCC 51907 / DSM 11121 / KW20 / Rd).